A 119-amino-acid chain; its full sequence is Fluoride-specific ion channel FluC (119 aa).

4 helical membrane passes run 5–25 (IIPLSIGAALGATARWLLNLA), 34–54 (TGNLFANWTGALLIGIFAETI), 59–79 (WKLLLITGFLGSLTTLSGFSL), and 97–117 (IFLHTAGSLLLTWLGLKIGAA). The Na(+) site is built by G69 and T72.

This sequence belongs to the fluoride channel Fluc/FEX (TC 1.A.43) family.

It is found in the cell inner membrane. It catalyses the reaction fluoride(in) = fluoride(out). Na(+) is not transported, but it plays an essential structural role and its presence is essential for fluoride channel function. In terms of biological role, fluoride-specific ion channel. Important for reducing fluoride concentration in the cell, thus reducing its toxicity. The polypeptide is Fluoride-specific ion channel FluC (Neisseria meningitidis serogroup C / serotype 2a (strain ATCC 700532 / DSM 15464 / FAM18)).